The chain runs to 154 residues: Xanthine-guanine phosphoribosyltransferase (154 aa).

5-phospho-alpha-D-ribose 1-diphosphate contacts are provided by residues Arg-37–Gly-38, Arg-69, and Glu-88–Thr-96. Arg-69 is a GMP binding site. Asp-89 contacts Mg(2+). 2 residues coordinate guanine: Asp-92 and Ile-135. Residues Asp-92 and Ile-135 each coordinate xanthine. GMP-binding positions include Asp-92 to Thr-96 and Trp-134 to Ile-135.

Belongs to the purine/pyrimidine phosphoribosyltransferase family. XGPT subfamily. As to quaternary structure, homotetramer. Mg(2+) serves as cofactor.

The protein resides in the cell inner membrane. It carries out the reaction GMP + diphosphate = guanine + 5-phospho-alpha-D-ribose 1-diphosphate. The enzyme catalyses XMP + diphosphate = xanthine + 5-phospho-alpha-D-ribose 1-diphosphate. It catalyses the reaction IMP + diphosphate = hypoxanthine + 5-phospho-alpha-D-ribose 1-diphosphate. It functions in the pathway purine metabolism; GMP biosynthesis via salvage pathway; GMP from guanine: step 1/1. It participates in purine metabolism; XMP biosynthesis via salvage pathway; XMP from xanthine: step 1/1. Purine salvage pathway enzyme that catalyzes the transfer of the ribosyl-5-phosphate group from 5-phospho-alpha-D-ribose 1-diphosphate (PRPP) to the N9 position of the 6-oxopurines guanine and xanthine to form the corresponding ribonucleotides GMP (guanosine 5'-monophosphate) and XMP (xanthosine 5'-monophosphate), with the release of PPi. To a lesser extent, also acts on hypoxanthine. The protein is Xanthine-guanine phosphoribosyltransferase of Vibrio vulnificus (strain CMCP6).